Reading from the N-terminus, the 155-residue chain is UPF0305 protein MTH_811 (155 aa).

This sequence belongs to the UPF0305 family.

In Methanothermobacter thermautotrophicus (strain ATCC 29096 / DSM 1053 / JCM 10044 / NBRC 100330 / Delta H) (Methanobacterium thermoautotrophicum), this protein is UPF0305 protein MTH_811.